Reading from the N-terminus, the 214-residue chain is Probable transaldolase (214 aa).

K83 (schiff-base intermediate with substrate) is an active-site residue.

It belongs to the transaldolase family. Type 3B subfamily.

It localises to the cytoplasm. The enzyme catalyses D-sedoheptulose 7-phosphate + D-glyceraldehyde 3-phosphate = D-erythrose 4-phosphate + beta-D-fructose 6-phosphate. It participates in carbohydrate degradation; pentose phosphate pathway; D-glyceraldehyde 3-phosphate and beta-D-fructose 6-phosphate from D-ribose 5-phosphate and D-xylulose 5-phosphate (non-oxidative stage): step 2/3. In terms of biological role, transaldolase is important for the balance of metabolites in the pentose-phosphate pathway. The sequence is that of Probable transaldolase from Desulfosudis oleivorans (strain DSM 6200 / JCM 39069 / Hxd3) (Desulfococcus oleovorans).